Consider the following 89-residue polypeptide: Barrier-to-autointegration factor (89 aa).

M1 carries the post-translational modification N-acetylmethionine. Position 2 is an N-acetylthreonine; in Barrier-to-autointegration factor, N-terminally processed (T2). Residues T2 and T3 each carry the phosphothreonine; by VRK1 and VRK2 modification. Position 4 is a phosphoserine; by VRK1 and VRK2 (S4). In terms of domain architecture, HhH spans 20-35; sequence VGSLAGIGEVLGKKLE.

Belongs to the BAF family. Homodimer. Heterodimerizes with BANF2. Interacts with ANKLE2/LEM4, leading to decreased phosphorylation by VRK1 and promoting dephosphorylation by protein phosphatase 2A (PP2A). Binds non-specifically to double-stranded DNA, and is found as a hexamer or dodecamer upon DNA binding. Binds to LEM domain-containing nuclear proteins such as LEMD3/MAN1, TMPO/LAP2 and EMD (emerin). Interacts with ANKLE1 (via LEM domain); the interaction may favor BANF1 dimerization. Interacts with CRX and LMNA (lamin-A). Binds linker histone H1.1 and core histones H3. Interacts with LEMD2 (via LEM domain). Interacts with PARP1; interaction takes place in response to oxidative DNA damage. In terms of processing, ser-4 is the major site of phosphorylation as compared to Thr-2 and Thr-3. Phosphorylation on Thr-2; Thr-3 and Ser-4 disrupts its ability to bind DNA and reduces its ability to bind LEM domain-containing proteins. Non phosphorylated BAF seems to enhance binding between EMD and LMNA. Dephosphorylated by protein phosphatase 2A (PP2A) following interaction with ANKLE2/LEM4 during mitotic exit, leading to mitotic nuclear envelope reassembly.

The protein resides in the nucleus. The protein localises to the chromosome. It localises to the nucleus envelope. Its subcellular location is the cytoplasm. Non-specific DNA-binding protein that plays key roles in mitotic nuclear reassembly, chromatin organization, DNA damage response, gene expression and intrinsic immunity against foreign DNA. Contains two non-specific double-stranded DNA (dsDNA)-binding sites which promote DNA cross-bridging. Plays a key role in nuclear membrane reformation at the end of mitosis by driving formation of a single nucleus in a spindle-independent manner. Transiently cross-bridges anaphase chromosomes via its ability to bridge distant DNA sites, leading to the formation of a dense chromatin network at the chromosome ensemble surface that limits membranes to the surface. Also acts as a negative regulator of innate immune activation by restricting CGAS activity toward self-DNA upon acute loss of nuclear membrane integrity. Outcompetes CGAS for DNA-binding, thereby preventing CGAS activation and subsequent damaging autoinflammatory responses. Also involved in DNA damage response: interacts with PARP1 in response to oxidative stress, thereby inhibiting the ADP-ribosyltransferase activity of PARP1. Involved in the recognition of exogenous dsDNA in the cytosol: associates with exogenous dsDNA immediately after its appearance in the cytosol at endosome breakdown and is required to avoid autophagy. In case of poxvirus infection, has an antiviral activity by blocking viral DNA replication. This is Barrier-to-autointegration factor (BANF1) from Bos taurus (Bovine).